The following is a 766-amino-acid chain: Ubiquitin carboxyl-terminal hydrolase creB (766 aa).

Residues 1–32 form a disordered region; the sequence is MGSFLKSFRKDVGSAAPSVGAPPAKKEPQPLP. Over residues 13 to 23 the composition is skewed to low complexity; that stretch reads GSAAPSVGAPP. Positions 55–466 constitute a USP domain; that stretch reads YGMENFGNTC…CAYVLFYQET (412 aa). The active-site Nucleophile is C64. Disordered stretches follow at residues 115 to 145 and 243 to 266; these read EALA…KDSP and ESPQ…SRTP. Residues 249–263 show a composition bias toward low complexity; that stretch reads SDVSDSVIPSSSSGS. H417 serves as the catalytic Proton acceptor. Positions 526–752 are disordered; sequence APTAPQLSTH…HDRSSHGKWR (227 aa). A compositionally biased stretch (pro residues) spans 548-572; the sequence is SPAPDPAPLTSLPPIPPIPETPPAP. Residues 573–620 are a coiled coil; the sequence is LTSRKSDLQSKKERVKEEKERKAAEKEKEKQRRKEIETRLKDRQRRED. Basic and acidic residues-rich tracts occupy residues 576-643 and 734-747; these read RKSD…RNHA and EQEH…DRSS.

This sequence belongs to the peptidase C19 family. Interacts with creA, creC and qutD.

It carries out the reaction Thiol-dependent hydrolysis of ester, thioester, amide, peptide and isopeptide bonds formed by the C-terminal Gly of ubiquitin (a 76-residue protein attached to proteins as an intracellular targeting signal).. Ubiquitin thioesterase component of the regulatory network controlling carbon source utilization through ubiquitination and deubiquitination involving creA, creB, creC, creD and acrB. Deubiquitinates the creA catabolic repressor and the quinate permease qutD. Also plays a role in response to carbon starvation and the control of extracellular proteases activity. The polypeptide is Ubiquitin carboxyl-terminal hydrolase creB (creB) (Emericella nidulans (strain FGSC A4 / ATCC 38163 / CBS 112.46 / NRRL 194 / M139) (Aspergillus nidulans)).